We begin with the raw amino-acid sequence, 707 residues long: Alpha-hemolysin translocation ATP-binding protein HlyB (707 aa).

The Peptidase C39 domain maps to 2–125 (DFHHKNNYGL…DLYQGNIILI (124 aa)). Histidine 83 is an active-site residue. The 283-residue stretch at 154–436 (FIETLIVSVF…LAQLWQDFQQ (283 aa)) folds into the ABC transmembrane type-1 domain. A run of 5 helical transmembrane segments spans residues 158 to 178 (LIVSVFLQLFALITPLFFQVV), 191 to 211 (LNIITIALAVVAIFEITLSGL), 269 to 289 (ALTSILDLLFSFIFFAVMWYY), 295 to 315 (LVILFSLPCYATWSIFISPIL), and 387 to 407 (AVMIINLWLGAHLVISGDLSI). The ABC transporter domain occupies 468 to 703 (ISFRNIRFRY…PESLYHYLHQ (236 aa)). 502-509 (GRSGSGKS) contacts ATP.

This sequence belongs to the ABC transporter superfamily. Protein-1 exporter (TC 3.A.1.109) family.

The protein resides in the cell membrane. Its function is as follows. Involved in the export of hemolysin A. The polypeptide is Alpha-hemolysin translocation ATP-binding protein HlyB (hlyB) (Proteus vulgaris).